Reading from the N-terminus, the 53-residue chain is Antitoxin RelB3 (53 aa).

In terms of assembly, forms heterodimers with RelE and possibly a heterotetramer RelE3-RelB3(2)-RelE3 from 2 heterodimers. The heterotetramer is probably not very stable in solution.

Functionally, antitoxin component of a type II toxin-antitoxin (TA) system. Probably neutralizes the toxic activity of cognate toxin RelE. The protein is Antitoxin RelB3 (relB3) of Methanocaldococcus jannaschii (strain ATCC 43067 / DSM 2661 / JAL-1 / JCM 10045 / NBRC 100440) (Methanococcus jannaschii).